The chain runs to 111 residues: MISDKIKLTAKDILEKEFKTGMRGYQQEEVDKFLDMIIKDYEAFHKEFEQLKQQNARLKRELEEQKLAATQVPQQPVQTPVAQPVYNNTNTDILKRLSNLEKAVFGSKLYE.

The stretch at isoleucine 38 to valine 72 forms a coiled coil.

Belongs to the GpsB family. Forms polymers through the coiled coil domains. Interacts with PBP1, MreC and EzrA.

Its subcellular location is the cytoplasm. In terms of biological role, divisome component that associates with the complex late in its assembly, after the Z-ring is formed, and is dependent on DivIC and PBP2B for its recruitment to the divisome. Together with EzrA, is a key component of the system that regulates PBP1 localization during cell cycle progression. Its main role could be the removal of PBP1 from the cell pole after pole maturation is completed. Also contributes to the recruitment of PBP1 to the division complex. Not essential for septum formation. The polypeptide is Cell cycle protein GpsB (Bacillus cereus (strain ATCC 10987 / NRS 248)).